A 342-amino-acid polypeptide reads, in one-letter code: L-threonine 3-dehydrogenase (342 aa).

Cysteine 38 lines the Zn(2+) pocket. Catalysis depends on charge relay system residues threonine 40 and histidine 43. Zn(2+) is bound by residues histidine 63, glutamate 64, cysteine 93, cysteine 96, cysteine 99, and cysteine 107. NAD(+) is bound by residues isoleucine 175, aspartate 195, arginine 200, 262-264, and 286-287; these read LGI and IY.

The protein belongs to the zinc-containing alcohol dehydrogenase family. In terms of assembly, homotetramer. The cofactor is Zn(2+).

It is found in the cytoplasm. The enzyme catalyses L-threonine + NAD(+) = (2S)-2-amino-3-oxobutanoate + NADH + H(+). The protein operates within amino-acid degradation; L-threonine degradation via oxydo-reductase pathway; glycine from L-threonine: step 1/2. Functionally, catalyzes the NAD(+)-dependent oxidation of L-threonine to 2-amino-3-ketobutyrate. This chain is L-threonine 3-dehydrogenase, found in Aeromonas salmonicida (strain A449).